The primary structure comprises 1266 residues: Formin-like protein 13 (1266 aa).

Residues 9 to 193 form the Phosphatase tensin-type domain; sequence YRKPPDGLLE…QYVSRRNLVS (185 aa). Catalysis depends on Cys-126, which acts as the Phosphocysteine intermediate. The C2 tensin-type domain maps to 199–337; it reads DRALTMDCVI…FRVELLFSDM (139 aa). Disordered stretches follow at residues 497-568, 597-825, 881-902, and 1210-1266; these read KPLV…LQHS, KNLI…GKGR, SASA…PKPE, and QLEA…RTAP. Over residues 529 to 538 the composition is skewed to pro residues; sequence PPTPSPPHPV. Polar residues predominate over residues 617–644; sequence EPSSKTTNSLLLSPQASPATPTNPSKTV. 4 stretches are compositionally biased toward pro residues: residues 686-698, 706-742, 754-781, and 806-815; these read LPRP…PPPM, VPPP…PPTP, PPAP…PPPL, and PNVPPTPALP. The region spanning 829–1226 is the FH2 domain; that stretch reads VNLKNSPAKK…KNAAEKEKPK (398 aa). 3 stretches are compositionally biased toward basic and acidic residues: residues 889-902, 1210-1248, and 1255-1266; these read GKSR…PKPE, QLEA…EKTK, and EMSDRLKERTAP.

This sequence belongs to the formin-like family. Class-II subfamily.

In Arabidopsis thaliana (Mouse-ear cress), this protein is Formin-like protein 13 (FH13).